The primary structure comprises 235 residues: Glycerol-3-phosphate acyltransferase (235 aa).

A run of 6 helical transmembrane segments spans residues 4-24, 56-76, 94-114, 126-146, 152-172, and 194-214; these read LLAI…IMAG, TVTL…VAFF, LLAG…GFKG, IGIA…TVWF, VASI…KYVF, and SLDY…LFTH.

The protein belongs to the PlsY family. In terms of assembly, probably interacts with PlsX.

It is found in the cell inner membrane. The enzyme catalyses an acyl phosphate + sn-glycerol 3-phosphate = a 1-acyl-sn-glycero-3-phosphate + phosphate. It functions in the pathway lipid metabolism; phospholipid metabolism. Catalyzes the transfer of an acyl group from acyl-phosphate (acyl-PO(4)) to glycerol-3-phosphate (G3P) to form lysophosphatidic acid (LPA). This enzyme utilizes acyl-phosphate as fatty acyl donor, but not acyl-CoA or acyl-ACP. The protein is Glycerol-3-phosphate acyltransferase of Chlorobium phaeovibrioides (strain DSM 265 / 1930) (Prosthecochloris vibrioformis (strain DSM 265)).